Here is a 160-residue protein sequence, read N- to C-terminus: MGVTKKPDLNDPVLRAKLAKGMGHNYYGEPAWPNDLLYIFPVVILGTIACNVGLAVLEPSMVGEPADPFATPLEILPEWYFFPVFQILRTVPNKLLGVLLMVSVPAGLLTVPFLENVNKFQNPFRRPVATTVFLIGTAVALWLGIGATLPIDKSLTLGLF.

Helical transmembrane passes span 36-56, 95-115, and 131-151; these read LLYI…GLAV, LLGV…PFLE, and TVFL…TLPI.

The protein belongs to the cytochrome b family. PetD subfamily. As to quaternary structure, the 4 large subunits of the cytochrome b6-f complex are cytochrome b6, subunit IV (17 kDa polypeptide, petD), cytochrome f and the Rieske protein, while the 4 small subunits are petG, petL, petM and petN. The complex functions as a dimer.

It is found in the plastid. The protein localises to the chloroplast thylakoid membrane. Its function is as follows. Component of the cytochrome b6-f complex, which mediates electron transfer between photosystem II (PSII) and photosystem I (PSI), cyclic electron flow around PSI, and state transitions. The sequence is that of Cytochrome b6-f complex subunit 4 from Coffea arabica (Arabian coffee).